The chain runs to 216 residues: Cytochrome c biogenesis ATP-binding export protein CcmA (216 aa).

An ABC transporter domain is found at 11 to 216 (LSANELTCIR…RKITLDYRFV (206 aa)). 43–50 (GPNGAGKT) serves as a coordination point for ATP.

Belongs to the ABC transporter superfamily. CcmA exporter (TC 3.A.1.107) family. As to quaternary structure, the complex is composed of two ATP-binding proteins (CcmA) and two transmembrane proteins (CcmB).

It localises to the cell inner membrane. It carries out the reaction heme b(in) + ATP + H2O = heme b(out) + ADP + phosphate + H(+). In terms of biological role, part of the ABC transporter complex CcmAB involved in the biogenesis of c-type cytochromes; once thought to export heme, this seems not to be the case, but its exact role is uncertain. Responsible for energy coupling to the transport system. This is Cytochrome c biogenesis ATP-binding export protein CcmA from Shewanella frigidimarina (strain NCIMB 400).